A 546-amino-acid polypeptide reads, in one-letter code: uncharacterized protein (546 aa).

One can recognise an SLH domain in the interval 52–123 (SVAELRDVQP…NTIEQLLQEN (72 aa)).

It belongs to the OprB family.

This is an uncharacterized protein from Synechocystis sp. (strain ATCC 27184 / PCC 6803 / Kazusa).